A 747-amino-acid polypeptide reads, in one-letter code: Major facilitator superfamily domain-containing protein 6-B (747 aa).

Helical transmembrane passes span leucine 15–glutamine 35, lysine 75–valine 95, threonine 222–valine 242, tryptophan 271–isoleucine 291, isoleucine 306–histidine 326, valine 391–tryptophan 411, threonine 420–isoleucine 440, valine 453–tyrosine 470, glycine 485–leucine 507, leucine 520–alanine 540, and glycine 546–glycine 566. Polar residues-rich tracts occupy residues asparagine 597 to aspartate 606 and asparagine 652 to alanine 668. Disordered stretches follow at residues asparagine 597 to alanine 625 and asparagine 652 to histidine 747. A compositionally biased stretch (low complexity) spans serine 675–serine 685.

The protein belongs to the major facilitator superfamily. MFSD6 family.

It is found in the membrane. This chain is Major facilitator superfamily domain-containing protein 6-B (mfsd6b), found in Danio rerio (Zebrafish).